Reading from the N-terminus, the 450-residue chain is 3-phosphoshikimate 1-carboxyvinyltransferase (450 aa).

Positions 1-23 (MSSHGAPIPMTSSACGPLTGEAR) are disordered. 3-phosphoshikimate-binding residues include Lys-28, Ser-29, and Arg-33. Lys-28 contacts phosphoenolpyruvate. Phosphoenolpyruvate-binding residues include Gly-101 and Arg-129. Residues Ser-174, Gln-176, Asp-327, and Lys-354 each coordinate 3-phosphoshikimate. Position 176 (Gln-176) interacts with phosphoenolpyruvate. The active-site Proton acceptor is Asp-327. Positions 358 and 403 each coordinate phosphoenolpyruvate.

Belongs to the EPSP synthase family. As to quaternary structure, monomer.

It is found in the cytoplasm. The enzyme catalyses 3-phosphoshikimate + phosphoenolpyruvate = 5-O-(1-carboxyvinyl)-3-phosphoshikimate + phosphate. It participates in metabolic intermediate biosynthesis; chorismate biosynthesis; chorismate from D-erythrose 4-phosphate and phosphoenolpyruvate: step 6/7. Functionally, catalyzes the transfer of the enolpyruvyl moiety of phosphoenolpyruvate (PEP) to the 5-hydroxyl of shikimate-3-phosphate (S3P) to produce enolpyruvyl shikimate-3-phosphate and inorganic phosphate. The sequence is that of 3-phosphoshikimate 1-carboxyvinyltransferase from Roseobacter denitrificans (strain ATCC 33942 / OCh 114) (Erythrobacter sp. (strain OCh 114)).